The following is a 146-amino-acid chain: Large ribosomal subunit protein uL15 (146 aa).

The segment covering 1–13 has biased composition (basic and acidic residues); that stretch reads MKLHELHSAEGSR. The tract at residues 1 to 55 is disordered; that stretch reads MKLHELHSAEGSRRNRKRVGRGTSSGYGKTSGRGQKGQLARQGGHTRLGFEGGQM. A compositionally biased stretch (gly residues) spans 23–35; sequence TSSGYGKTSGRGQ.

Belongs to the universal ribosomal protein uL15 family. Part of the 50S ribosomal subunit.

Functionally, binds to the 23S rRNA. This chain is Large ribosomal subunit protein uL15, found in Lactobacillus helveticus (strain DPC 4571).